Here is a 122-residue protein sequence, read N- to C-terminus: MSIQRKALGNKGEEEACKYIQNLGYNIMERNYRCKIGELDIIAWDPVGMLVFLEVRSRSGRAFGVPEESVNYRKQNKLRMLAQQFLLTKSEFAKISCRFDVIGVYFNKEGSVQEIKHIKNAL.

The protein belongs to the UPF0102 family.

The sequence is that of UPF0102 protein Dred_2035 from Desulforamulus reducens (strain ATCC BAA-1160 / DSM 100696 / MI-1) (Desulfotomaculum reducens).